A 427-amino-acid polypeptide reads, in one-letter code: Enolase (427 aa).

A (2R)-2-phosphoglycerate-binding site is contributed by Q163. The active-site Proton donor is the E205. Mg(2+) contacts are provided by D242, E285, and D312. (2R)-2-phosphoglycerate is bound by residues K337, R366, S367, and K388. K337 acts as the Proton acceptor in catalysis.

Belongs to the enolase family. The cofactor is Mg(2+).

It is found in the cytoplasm. Its subcellular location is the secreted. It localises to the cell surface. It catalyses the reaction (2R)-2-phosphoglycerate = phosphoenolpyruvate + H2O. Its pathway is carbohydrate degradation; glycolysis; pyruvate from D-glyceraldehyde 3-phosphate: step 4/5. Its function is as follows. Catalyzes the reversible conversion of 2-phosphoglycerate (2-PG) into phosphoenolpyruvate (PEP). It is essential for the degradation of carbohydrates via glycolysis. The protein is Enolase of Variovorax paradoxus (strain S110).